A 448-amino-acid chain; its full sequence is Homogentisate 1,2-dioxygenase (448 aa).

3 residues coordinate Fe cation: H340, E346, and H377.

Belongs to the homogentisate dioxygenase family. Requires Fe cation as cofactor.

The catalysed reaction is homogentisate + O2 = 4-maleylacetoacetate + H(+). It participates in amino-acid degradation; L-phenylalanine degradation; acetoacetate and fumarate from L-phenylalanine: step 4/6. This Emericella nidulans (strain FGSC A4 / ATCC 38163 / CBS 112.46 / NRRL 194 / M139) (Aspergillus nidulans) protein is Homogentisate 1,2-dioxygenase (hmgA).